The sequence spans 218 residues: Nuclear cap-binding protein subunit 2 (218 aa).

MRNA contacts are provided by residues Tyr-24, Tyr-49, 118–122 (TIDLD), 129–133 (RQFGR), and 139–140 (QV). In terms of domain architecture, RRM spans 46 to 124 (ATIYVGNLSF…REITIDLDPG (79 aa)). Residues 176–194 (DPHKNHHHHHHGHHHHHGQ) show a composition bias toward basic residues. The segment at 176–200 (DPHKNHHHHHHGHHHHHGQPHAAAA) is disordered.

It belongs to the RRM NCBP2 family. As to quaternary structure, component of the nuclear cap-binding complex (CBC).

The protein localises to the nucleus. Component of the cap-binding complex (CBC) involved in the nuclear export of capped U snRNAs. The CBC complex is required for efficient pre-mRNA splicing through efficient commitment complex and spliceosome formation; and involved in rRNA processing at sites A0, A1 and A2. The sequence is that of Nuclear cap-binding protein subunit 2 (CBC2) from Eremothecium gossypii (strain ATCC 10895 / CBS 109.51 / FGSC 9923 / NRRL Y-1056) (Yeast).